The primary structure comprises 771 residues: Endoplasmin homolog (771 aa).

An N-terminal signal peptide occupies residues 1–24 (MANSSLLRVVLVALLLLGSVTVSA). 3 residues coordinate ATP: Asn63, Asp109, and Phe160. An N-linked (GlcNAc...) asparagine glycan is attached at Asn63. Positions 254 to 282 (AATPESAAEERSLDEGAVEEDPDKEGDTQ) are disordered. N-linked (GlcNAc...) asparagine glycosylation is found at Asn306 and Asn402. The tract at residues 727 to 771 (ADDSLLPPDDAEYTVSDTETEEEEEQPKVDTNAHEEAETDGEGDL) is disordered. The span at 752–762 (QPKVDTNAHEE) shows a compositional bias: basic and acidic residues. The short motif at 768 to 771 (EGDL) is the Prevents secretion from ER element.

This sequence belongs to the heat shock protein 90 family. In terms of assembly, homotetramer.

The protein resides in the endoplasmic reticulum. Molecular chaperone that functions in the processing and transport of secreted proteins. Required for the synthesis of lipophosphoglycan (LPG), a cell surface glycoconjugate. Necessary for the attachment of the galactosyl residue to the mannose within the phosphoglycan repeats of the nascent LPG chain. Also required for addition of phosphoglycan to acid phosphatase. Not required for normal growth. Has ATPase activity. Binds heparin with micromolar affinity which may facilitate infection of host cells. The polypeptide is Endoplasmin homolog (Leishmania donovani).